We begin with the raw amino-acid sequence, 251 residues long: Putative imidazole glycerol phosphate synthase subunit hisF2 (251 aa).

Aspartate 130 is a catalytic residue.

Belongs to the HisA/HisF family. In terms of assembly, heterodimer of HisH and HisF.

Its subcellular location is the cytoplasm. The enzyme catalyses 5-[(5-phospho-1-deoxy-D-ribulos-1-ylimino)methylamino]-1-(5-phospho-beta-D-ribosyl)imidazole-4-carboxamide + L-glutamine = D-erythro-1-(imidazol-4-yl)glycerol 3-phosphate + 5-amino-1-(5-phospho-beta-D-ribosyl)imidazole-4-carboxamide + L-glutamate + H(+). Its pathway is amino-acid biosynthesis; L-histidine biosynthesis; L-histidine from 5-phospho-alpha-D-ribose 1-diphosphate: step 5/9. IGPS catalyzes the conversion of PRFAR and glutamine to IGP, AICAR and glutamate. The HisF subunit catalyzes the cyclization activity that produces IGP and AICAR from PRFAR using the ammonia provided by the HisH subunit. This is Putative imidazole glycerol phosphate synthase subunit hisF2 (hisF2) from Pseudomonas aeruginosa (strain ATCC 15692 / DSM 22644 / CIP 104116 / JCM 14847 / LMG 12228 / 1C / PRS 101 / PAO1).